Consider the following 1104-residue polypeptide: Valine--tRNA ligase, mitochondrial (1104 aa).

The N-terminal 47 residues, 1 to 47 (MNKWLNTLSKTFTFRLLNCHYRRSLPLCQNFSLKKSLTHNQVRFFKM), are a transit peptide targeting the mitochondrion. Serine 73 carries the phosphoserine modification. Residues 99-119 (KKNAAATTGASQKKPKKKKEV) form a disordered region. The 'HIGH' region signature appears at 190-200 (PNVTGALHIGH). Residues serine 294 and serine 332 each carry the phosphoserine modification. Positions 703–707 (KMSKS) match the 'KMSKS' region motif. Position 706 (lysine 706) interacts with ATP. Serine 707 carries the post-translational modification Phosphoserine. A Phosphothreonine modification is found at threonine 1003.

Belongs to the class-I aminoacyl-tRNA synthetase family.

The protein localises to the cytoplasm. It is found in the mitochondrion. The catalysed reaction is tRNA(Val) + L-valine + ATP = L-valyl-tRNA(Val) + AMP + diphosphate. The protein is Valine--tRNA ligase, mitochondrial (VAS1) of Saccharomyces cerevisiae (strain ATCC 204508 / S288c) (Baker's yeast).